Consider the following 841-residue polypeptide: Toll-like receptor 4 (841 aa).

Positions 1–23 are cleaved as a signal peptide; the sequence is MIPRIRLAVATIPAMAFLSCLRS. The Extracellular segment spans residues 24–632; sequence ESWDPCVQVV…FRNATCQISE (609 aa). Cysteines 29 and 40 form a disulfide. Asparagine 35 is a glycosylation site (N-linked (GlcNAc...) asparagine). LRR repeat units lie at residues 55-76, 79-100, 103-124, 127-148, 151-172, 176-197, and 205-225; these read SVKI…SFSS, ELQV…AYQG, YLST…AFSG, SLQK…PIGH, TLNE…EYFS, NLEH…HLQV, and NLSL…AFNK. Asparagine 205, asparagine 238, asparagine 282, and asparagine 309 each carry an N-linked (GlcNAc...) asparagine glycan. Cysteine 281 and cysteine 306 are oxidised to a cystine. LRR repeat units lie at residues 374–395, 400–422, 423–444, 448–469, 472–495, 497–518, 521–542, and 545–568; these read NLQF…SHNE, KLKH…MGLE, QLEY…SIFL, NLHY…IFAG, SLQT…FTDL, NLIL…AFHS, RLQV…PYKP, and SLRI…QHLP. Residues cysteine 390 and cysteine 391 are joined by a disulfide bond. Asparagine 526 carries N-linked (GlcNAc...) asparagine glycosylation. Asparagine 575 is a glycosylation site (N-linked (GlcNAc...) asparagine). One can recognise an LRRCT domain in the interval 579-630; it reads NDFSCACEHQTFLQWVKDQKQLLVGAEQMVCTQPLEMQDLPVLSFRNATCQI. Intrachain disulfides connect cysteine 583–cysteine 609 and cysteine 585–cysteine 628. Asparagine 625 is a glycosylation site (N-linked (GlcNAc...) asparagine). Residues 633–653 form a helical membrane-spanning segment; it reads AVISASVLTFLLVSVAGILVY. At 654 to 841 the chain is on the cytoplasmic side; it reads KFYFHLLLFV…SNQHDTTAFT (188 aa). One can recognise a TIR domain in the interval 673 to 816; sequence STYDAFVIYS…IFWRRLKKAL (144 aa).

It belongs to the Toll-like receptor family. As to quaternary structure, belongs to the lipopolysaccharide (LPS) receptor, a multi-protein complex containing at least CD14, LY96 and TLR4. Binding to bacterial LPS leads to homodimerization. Interacts with LY96 via the extracellular domain. Interacts with MYD88 and TIRAP via their respective TIR domains. Interacts with NOX4. Interacts with CNPY3 and HSP90B1; this interaction is required for proper folding in the endoplasmic reticulum. Interacts with MAP3K21; this interaction leads to negative regulation of TLR4 signaling. Interacts with CD36, following CD36 stimulation by oxLDL or amyloid-beta 42, and forms a heterodimer with TLR6. The trimeric complex is internalized and triggers inflammatory response. LYN kinase activity facilitates TLR4-TLR6 heterodimerization and signal initiation. Interacts with TICAM1 in response to LPS in a WDFY1-dependent manner. Interacts with WDFY1 in response to LPS. Interacts with SMPDL3B. Interacts with CEACAM1; upon lipopolysaccharide stimulation, forms a complex including TLR4 and the phosphorylated form of SYK and CEACAM1, which in turn, recruits PTPN6 that dephosphorylates SYK, reducing the production of reactive oxygen species (ROS) and lysosome disruption, which in turn, reduces the activity of the inflammasome. Interacts with RFTN1; the interaction occurs in response to lipopolysaccharide stimulation. Interacts with SCIMP; the interaction occurs in response to lipopolysaccharide stimulation and is enhanced by phosphorylation of SCIMP by LYN. This interaction facilitates the phosphorylation of TLR4 by LYN which elicits a selective cytokine response in macrophages. Interacts with TRAF3IP3. Interacts with TREM1; this interaction enhances TLR4-mediated inflammatory response. Interacts with ZG16B/PAUF. Interacts with CD82; this interaction inhibits TLR4-mediated signaling pathway. Post-translationally, phosphorylated on tyrosine residues by LYN after binding lipopolysaccharide. In terms of processing, ubiquitinated by RNF128 via 'Lys-28'-linked polyubiquitin chains, leading to proteasomal degradation.

The protein resides in the cell membrane. Its subcellular location is the early endosome. The protein localises to the cell projection. It is found in the ruffle. Its function is as follows. Transmembrane receptor that functions as a pattern recognition receptor recognizing pathogen- and damage-associated molecular patterns (PAMPs and DAMPs) to induce innate immune responses via downstream signaling pathways. At the plasma membrane, cooperates with LY96 to mediate the innate immune response to bacterial lipopolysaccharide (LPS). Also involved in LPS-independent inflammatory responses triggered by free fatty acids, such as palmitate, and Ni(2+). Mechanistically, acts via MYD88, TIRAP and TRAF6, leading to NF-kappa-B activation, cytokine secretion and the inflammatory response. Alternatively, CD14-mediated TLR4 internalization via endocytosis is associated with the initiation of a MYD88-independent signaling via the TICAM1-TBK1-IRF3 axis leading to type I interferon production. In addition to the secretion of proinflammatory cytokines, initiates the activation of NLRP3 inflammasome and formation of a positive feedback loop between autophagy and NF-kappa-B signaling cascade. In complex with TLR6, promotes inflammation in monocytes/macrophages by associating with TLR6 and the receptor CD86. Upon ligand binding, such as oxLDL or amyloid-beta 42, the TLR4:TLR6 complex is internalized and triggers inflammatory response, leading to NF-kappa-B-dependent production of CXCL1, CXCL2 and CCL9 cytokines, via MYD88 signaling pathway, and CCL5 cytokine, via TICAM1 signaling pathway. In myeloid dendritic cells, vesicular stomatitis virus glycoprotein G but not LPS promotes the activation of IRF7, leading to type I IFN production in a CD14-dependent manner. The sequence is that of Toll-like receptor 4 (TLR4) from Sus scrofa (Pig).